The following is a 92-amino-acid chain: UPF0298 protein ABC2380 (92 aa).

It belongs to the UPF0298 family.

The protein localises to the cytoplasm. In Shouchella clausii (strain KSM-K16) (Alkalihalobacillus clausii), this protein is UPF0298 protein ABC2380.